The following is a 583-amino-acid chain: Aspartate--tRNA(Asp/Asn) ligase (583 aa).

Position 172 (Glu-172) interacts with L-aspartate. The interval 196–199 (QMLK) is aspartate. L-aspartate is bound at residue Arg-218. Residues 218–220 (RDE) and Gln-227 contribute to the ATP site. Position 446 (His-446) interacts with L-aspartate. Position 480 (Glu-480) interacts with ATP. Arg-487 lines the L-aspartate pocket. Residue 532-535 (GLDR) participates in ATP binding.

The protein belongs to the class-II aminoacyl-tRNA synthetase family. Type 1 subfamily. As to quaternary structure, homodimer.

The protein resides in the cytoplasm. It catalyses the reaction tRNA(Asx) + L-aspartate + ATP = L-aspartyl-tRNA(Asx) + AMP + diphosphate. Its function is as follows. Aspartyl-tRNA synthetase with relaxed tRNA specificity since it is able to aspartylate not only its cognate tRNA(Asp) but also tRNA(Asn). Reaction proceeds in two steps: L-aspartate is first activated by ATP to form Asp-AMP and then transferred to the acceptor end of tRNA(Asp/Asn). This Streptococcus mutans serotype c (strain ATCC 700610 / UA159) protein is Aspartate--tRNA(Asp/Asn) ligase.